The sequence spans 493 residues: 6-aminohexanoate-cyclic-dimer hydrolase (493 aa).

Active-site charge relay system residues include lysine 72 and serine 150. The Acyl-ester intermediate role is filled by serine 174.

This sequence belongs to the amidase family. In terms of assembly, homodimer.

The enzyme catalyses 1,8-diazacyclotetradecane-2,9-dione + H2O = N-(6-aminohexanoyl)-6-aminohexanoate. Its pathway is xenobiotic degradation; nylon-6 oligomer degradation. In terms of biological role, catalyzes the hydrolysis of 6-aminohexanoic acid cyclic dimer (1,8-diazacyclotetradecane-2,9-dione) to form the linear dimer 6-aminohexanoyl-6-aminohexanoic acid. The sequence is that of 6-aminohexanoate-cyclic-dimer hydrolase (nylA) from Pseudomonas sp. (strain NK87).